A 148-amino-acid polypeptide reads, in one-letter code: Large ribosomal subunit protein uL15 (148 aa).

The tract at residues 14-54 (HRKKRVGCGEGGGHGKTSGRGGKGQTARSGSSIRPGFEGGQ) is disordered. The span at 21 to 37 (CGEGGGHGKTSGRGGKG) shows a compositional bias: gly residues.

The protein belongs to the universal ribosomal protein uL15 family. In terms of assembly, part of the 50S ribosomal subunit.

In terms of biological role, binds to the 23S rRNA. The protein is Large ribosomal subunit protein uL15 of Opitutus terrae (strain DSM 11246 / JCM 15787 / PB90-1).